We begin with the raw amino-acid sequence, 504 residues long: Maturase K (504 aa).

It belongs to the intron maturase 2 family. MatK subfamily.

The protein localises to the plastid. The protein resides in the chloroplast. In terms of biological role, usually encoded in the trnK tRNA gene intron. Probably assists in splicing its own and other chloroplast group II introns. The protein is Maturase K of Mentzelia laevicaulis (Blazing star).